The chain runs to 691 residues: ERI1 exoribonuclease 2 (691 aa).

The region spanning 37 to 226 (LIVIDFESTC…DDSRNTALLA (190 aa)) is the Exonuclease domain. Mg(2+) contacts are provided by Asp41, Glu43, and Asp156. The active-site Proton acceptor is the Glu43. Glu43 contributes to the AMP binding site. His213 acts as the Proton acceptor in catalysis. His213 lines the AMP pocket. Asp218 serves as a coordination point for Mg(2+). Positions 597, 599, 622, and 634 each coordinate Zn(2+). The GRF-type zinc finger occupies 597 to 643 (CKCGRRSKRLVVSNNGPNHGKVFYCCPIGKYQENRKCCGYFKWEQTL).

The protein belongs to the ERI2 family. Mg(2+) serves as cofactor.

The sequence is that of ERI1 exoribonuclease 2 (ERI2) from Homo sapiens (Human).